We begin with the raw amino-acid sequence, 1469 residues long: MENFHHRPFKGGFGVGRVPTSLYYSLSDFSLSAISIFPTHYDQPYLNEAPSWYKYSLESGLVCLYLYLIYRWITRSFTVKQTVGSEFSGLRKAHGILLWLLSILFLGMTAFMFVNDAFPTAFSDPPVKICLLAYSVHLFLLHSLRMIYPRARPTLYHAAVLLNLLLLPPIFHFYSYPFFFVDHPPLSSYSPFLWFYFFITIVGNFIPLFTPRVWYPLFPEDNYQPSAEQVCSMFNFACSYGYLNPLVLTAKRRVVEVDDTPVIPDYDKNKAWTYRFERMKTPSLFITIHKIFWRQILGMGVSSFMVSVCQFLSPIALNRLLKHLESPSSSSVNPLVWIVLLLTGPFLTSLFTQFYLFMSTRYLARSYTTLVQQIYNKVIRSRFVQNKSGDSKVGRSNNLISTDVDDIGEIREFIHIIVRAPVEIAGSIYLLQKLLGWSAYVGLALTVLTCSVPIVLGPLVAKLTLRANRATDSRIELMSELLQSIRITKFFGWELPMLDRVKQRRQVELNRTWKLLLMEICIQVLVESLPVFSMFATFVVFTTIMGQTITPSIAFTSISLFSFIRTQFSWIAYLMRQIVQIFVSIGRVSDFLNDPDEVDPVNTIEDTSQEIGFFNASLTWVSNPSPGDFCLRDLNIVFPRNKLSIVIGPTGSGKSSLISALLGELSLNKGSYNLPRSKGVSYVSQVPWLRNATIRDNILFDYPYIEERYKKVIQACGLLTDLQSFVASDLTEIGEKGVTLSGGQKQRIALARAVYSPTSIVLMDDVFSALDIHTSNWIYKHCFQSSLMENRTVILVTHNVHLFMDSAAFIVTVKNGSAFPVTDKSSPLLFLAEQAASASEAAAPDLAAIPIPNEVDDAEAADEKDGKLVEEEQRVTGDVVFSEIFSYMKHFGSGFYVAAVLLFFVTTQATSILIDLWVAFWTNSSVNSPDVNNNKFLFVYGTMLLAYSLLDFLRTVSYDRGAWWASRKLHDSMLESVFGTFASWFDKTPTGRIVNRFAKDIRSIDMNLSGWLFFSINCFLSVAGGILSVSSAMPIFMIPAVIVCLAGYYFGLLYTRAQVGVKRLISIYTSPIFSLLGESIVGVSVIRAFNRQTIFKQMFSERLDNLVRLQSTSYNLNRWVAVRTDGISGLVGAIAGLIALLQKDLSPGVVGFSLNQAVIFSSSVLLFVRSCNSLQAEMNSYERVLEYSKLPQEPAPTIAGQVPATWPKEGDIVFNHVSVSYSAAGPTILKDVNLHINPSEKVAVVGRTGSGKSTLGLTLLRFTHRISGEIYINGRETQSVNLNALRQRISFIPQDPILFSGTVRSNLDPFDELEDNFLNEALKTSGASSMIMAHTDDQKPIHITLDTHVASEGSNFSQGQKQVLALARAIVRRSKIIILDECTASVDDAMDQKIQKTLREAFGDATMLCIAHRLKTIVDYDKVMVLDKGVLVEYGPPAVLYHNNGHFRRMCDGSGITFLPPETRGSKSA.

8 helical membrane-spanning segments follow: residues 21–40 (SLYY…FPTH), 55–74 (YSLE…RWIT), 94–114 (HGIL…FMFV), 121–141 (AFSD…LFLL), 160–180 (VLLN…PFFF), 189–209 (YSPF…IPLF), 296–316 (ILGM…SPIA), and 337–357 (WIVL…FYLF). The region spanning 296-580 (ILGMGVSSFM…IAYLMRQIVQ (285 aa)) is the ABC transmembrane type-1 1 domain. Asparagine 386 carries an N-linked (GlcNAc...) asparagine glycan. The next 2 helical transmembrane spans lie at 412–432 (EFIH…YLLQ) and 441–461 (VGLA…PLVA). N-linked (GlcNAc...) asparagine glycosylation occurs at asparagine 510. A run of 2 helical transmembrane segments spans residues 524 to 544 (VLVE…FTTI) and 553 to 573 (IAFT…WIAY). Residues 611–840 (IGFFNASLTW…LAEQAASASE (230 aa)) enclose the ABC transporter 1 domain. N-linked (GlcNAc...) asparagine glycosylation is present at asparagine 615. 648-655 (GPTGSGKS) is an ATP binding site. Asparagine 691, asparagine 790, and asparagine 815 each carry an N-linked (GlcNAc...) asparagine glycan. A helical transmembrane segment spans residues 894–914 (GFYVAAVLLFFVTTQATSILI). The ABC transmembrane type-1 2 domain occupies 897–1176 (VAAVLLFFVT…FVRSCNSLQA (280 aa)). Residue asparagine 923 is glycosylated (N-linked (GlcNAc...) asparagine). Residues 936–956 (FLFVYGTMLLAYSLLDFLRTV) traverse the membrane as a helical segment. Residue asparagine 1007 is glycosylated (N-linked (GlcNAc...) asparagine). 5 consecutive transmembrane segments (helical) span residues 1009 to 1029 (SGWL…ILSV), 1033 to 1053 (MPIF…FGLL), 1065 to 1085 (ISIY…GVSV), 1120 to 1140 (VAVR…LIAL), and 1148 to 1168 (GVVG…LLFV). The ABC transporter 2 domain maps to 1214–1453 (FNHVSVSYSA…NGHFRRMCDG (240 aa)). Residue 1246 to 1253 (GRTGSGKS) coordinates ATP. A glycan (N-linked (GlcNAc...) asparagine) is linked at asparagine 1355.

Belongs to the ABC transporter superfamily. ABCC family. Conjugate transporter (TC 3.A.1.208) subfamily.

It localises to the vacuole membrane. The enzyme catalyses ATP + H2O + xenobioticSide 1 = ADP + phosphate + xenobioticSide 2.. In terms of biological role, involved in detoxification of xenobiotics, and vacuolar sequestration of glutathione S-conjugates. Together with abc2, required for accumulation of a red pigment (ade pigment) in the vacuole of a mutant affected in the adenine biosynthetic pathway. The sequence is that of ATP-binding cassette transporter abc4 from Schizosaccharomyces pombe (strain 972 / ATCC 24843) (Fission yeast).